The chain runs to 304 residues: PTB domain-containing engulfment adapter protein 1 (304 aa).

Thr16 carries the post-translational modification Phosphothreonine. The PID domain occupies 21 to 176; the sequence is SKHYIPYNAK…AGMQKRIQDL (156 aa). A coiled-coil region spans residues 159–200; it reads DVETRKQIAGMQKRIQDLETENMELKNKVQDLESRLRTTQVS. Position 223 is a phosphoserine (Ser223).

Belongs to the ced-6 family. Homodimer. Interacts with clathrin and MEGF10. Interacts with GDP-bound ARF6, but not with GTP-bound ARF6. Part of a complex composed of GULP1, ACAP1 and ARF6. Interacts with ACAP1, LRP1 and STAB2. In terms of tissue distribution, detected throughout the brain, particularly in Purkinje cells, hippocampal and cortical neurons (at protein level).

The protein localises to the cytoplasm. Functionally, modulates cellular glycosphingolipid and cholesterol transport. May play a role in the internalization of various LRP1 ligands, such as PSAP. May function as an adapter protein. Required for efficient phagocytosis of apoptotic cells. Increases cellular levels of GTP-bound ARF6. The polypeptide is PTB domain-containing engulfment adapter protein 1 (Gulp1) (Mus musculus (Mouse)).